The chain runs to 318 residues: CRISPR-associated endonuclease Cas1 1 (318 aa).

The Mn(2+) site is built by glutamate 160, histidine 225, and glutamate 240.

This sequence belongs to the CRISPR-associated endonuclease Cas1 family. In terms of assembly, homodimer, forms a heterotetramer with a Cas2 homodimer. Mg(2+) is required as a cofactor. Requires Mn(2+) as cofactor.

Its function is as follows. CRISPR (clustered regularly interspaced short palindromic repeat), is an adaptive immune system that provides protection against mobile genetic elements (viruses, transposable elements and conjugative plasmids). CRISPR clusters contain spacers, sequences complementary to antecedent mobile elements, and target invading nucleic acids. CRISPR clusters are transcribed and processed into CRISPR RNA (crRNA). Acts as a dsDNA endonuclease. Involved in the integration of spacer DNA into the CRISPR cassette. This is CRISPR-associated endonuclease Cas1 1 from Thermodesulfovibrio yellowstonii (strain ATCC 51303 / DSM 11347 / YP87).